The primary structure comprises 336 residues: Biotin synthase (336 aa).

The 228-residue stretch at 54–281 (NAIQLSTLLS…KAMVRLSAGR (228 aa)) folds into the Radical SAM core domain. The [4Fe-4S] cluster site is built by Cys-69, Cys-73, and Cys-76. 4 residues coordinate [2Fe-2S] cluster: Cys-113, Cys-144, Cys-204, and Arg-276.

Belongs to the radical SAM superfamily. Biotin synthase family. In terms of assembly, homodimer. It depends on [4Fe-4S] cluster as a cofactor. The cofactor is [2Fe-2S] cluster.

It carries out the reaction (4R,5S)-dethiobiotin + (sulfur carrier)-SH + 2 reduced [2Fe-2S]-[ferredoxin] + 2 S-adenosyl-L-methionine = (sulfur carrier)-H + biotin + 2 5'-deoxyadenosine + 2 L-methionine + 2 oxidized [2Fe-2S]-[ferredoxin]. The protein operates within cofactor biosynthesis; biotin biosynthesis; biotin from 7,8-diaminononanoate: step 2/2. Its function is as follows. Catalyzes the conversion of dethiobiotin (DTB) to biotin by the insertion of a sulfur atom into dethiobiotin via a radical-based mechanism. This is Biotin synthase from Burkholderia mallei (strain ATCC 23344).